The following is a 429-amino-acid chain: Enolase (429 aa).

Gln163 serves as a coordination point for (2R)-2-phosphoglycerate. The active-site Proton donor is Glu205. Mg(2+) contacts are provided by Asp242, Glu286, and Asp313. The (2R)-2-phosphoglycerate site is built by Lys338, Arg367, Ser368, and Lys389. Catalysis depends on Lys338, which acts as the Proton acceptor.

This sequence belongs to the enolase family. Mg(2+) is required as a cofactor.

It localises to the cytoplasm. It is found in the secreted. Its subcellular location is the cell surface. The catalysed reaction is (2R)-2-phosphoglycerate = phosphoenolpyruvate + H2O. It participates in carbohydrate degradation; glycolysis; pyruvate from D-glyceraldehyde 3-phosphate: step 4/5. Its function is as follows. Catalyzes the reversible conversion of 2-phosphoglycerate (2-PG) into phosphoenolpyruvate (PEP). It is essential for the degradation of carbohydrates via glycolysis. This Citrifermentans bemidjiense (strain ATCC BAA-1014 / DSM 16622 / JCM 12645 / Bem) (Geobacter bemidjiensis) protein is Enolase.